A 468-amino-acid chain; its full sequence is ATP synthase subunit beta (468 aa).

148–155 (GGAGVGKT) contacts ATP.

It belongs to the ATPase alpha/beta chains family. As to quaternary structure, F-type ATPases have 2 components, CF(1) - the catalytic core - and CF(0) - the membrane proton channel. CF(1) has five subunits: alpha(3), beta(3), gamma(1), delta(1), epsilon(1). CF(0) has three main subunits: a(1), b(2) and c(9-12). The alpha and beta chains form an alternating ring which encloses part of the gamma chain. CF(1) is attached to CF(0) by a central stalk formed by the gamma and epsilon chains, while a peripheral stalk is formed by the delta and b chains.

Its subcellular location is the cell inner membrane. The catalysed reaction is ATP + H2O + 4 H(+)(in) = ADP + phosphate + 5 H(+)(out). Its function is as follows. Produces ATP from ADP in the presence of a proton gradient across the membrane. The catalytic sites are hosted primarily by the beta subunits. This chain is ATP synthase subunit beta, found in Xanthomonas campestris pv. campestris (strain B100).